Here is a 156-residue protein sequence, read N- to C-terminus: 3-hydroxyacyl-[acyl-carrier-protein] dehydratase FabZ (156 aa).

Residue His-57 is part of the active site.

It belongs to the thioester dehydratase family. FabZ subfamily.

The protein resides in the cytoplasm. The enzyme catalyses a (3R)-hydroxyacyl-[ACP] = a (2E)-enoyl-[ACP] + H2O. Functionally, involved in unsaturated fatty acids biosynthesis. Catalyzes the dehydration of short chain beta-hydroxyacyl-ACPs and long chain saturated and unsaturated beta-hydroxyacyl-ACPs. The protein is 3-hydroxyacyl-[acyl-carrier-protein] dehydratase FabZ of Anaeromyxobacter dehalogenans (strain 2CP-1 / ATCC BAA-258).